We begin with the raw amino-acid sequence, 409 residues long: MKEKVVLAYSGGLDTSVILKWLCEKGFDVIAYVANVGQKDDFVAIKEKALKTGASKVYVEDLRREFVTDYIFTALLGNAMYEGRYLLGTAIARPLIAKRQVEIAEKEGAQYVAHGATGKGNDQVRFELTYAALNPNLKVISPWKDPEFLAKFKGRTDLINYAMEKGIPIKVSKKRPYSEDENLMHISHEAGKLEDPAHIPDEDVFTWTVSPKDAPDEETLLEIHFENGIPVKVVNLKDGTEKTDPLELFEYLNEVGAKNGVGRLDMVENRFIGIKSRGVYETPGATILWIAHRDLEGITMDKEVMHLRDMLAPKFAELIYNGFWFSPEMEFLLAAFRKAQENVTGKVTVSIYKGNVMPVARYSPYSLYNPELSSMDVEGGFDATDSKGFINIHALRLKVHQLVKKGYQR.

Residues 8-16 (AYSGGLDTS) and Ala34 each bind ATP. Tyr85 lines the L-citrulline pocket. Position 115 (Gly115) interacts with ATP. Positions 117, 121, and 122 each coordinate L-aspartate. Asn121 serves as a coordination point for L-citrulline. The L-citrulline site is built by Arg125, Ser178, Ser187, Glu268, and Tyr280.

It belongs to the argininosuccinate synthase family. Type 1 subfamily. Homotetramer.

It localises to the cytoplasm. It carries out the reaction L-citrulline + L-aspartate + ATP = 2-(N(omega)-L-arginino)succinate + AMP + diphosphate + H(+). It functions in the pathway amino-acid biosynthesis; L-arginine biosynthesis; L-arginine from L-ornithine and carbamoyl phosphate: step 2/3. The polypeptide is Argininosuccinate synthase (Thermotoga maritima (strain ATCC 43589 / DSM 3109 / JCM 10099 / NBRC 100826 / MSB8)).